Here is a 34-residue protein sequence, read N- to C-terminus: Cytochrome c oxidase polypeptide 2A (34 aa).

Methionine 1 bears the N-formylmethionine mark. A helical membrane pass occupies residues 4-34; the sequence is KPKGALAVILVLTLTILVFWLGVYAVFFARG.

It is found in the cell membrane. The catalysed reaction is 4 Fe(II)-[cytochrome c] + O2 + 8 H(+)(in) = 4 Fe(III)-[cytochrome c] + 2 H2O + 4 H(+)(out). The protein is Cytochrome c oxidase polypeptide 2A (cbaD) of Thermus thermophilus (strain ATCC 27634 / DSM 579 / HB8).